The primary structure comprises 523 residues: GMP synthase [glutamine-hydrolyzing] (523 aa).

The Glutamine amidotransferase type-1 domain maps to 8–205; sequence KILILDFGSQ…VVNICGCETK (198 aa). Cysteine 85 serves as the catalytic Nucleophile. Catalysis depends on residues histidine 179 and glutamate 181. The region spanning 206–398 is the GMPS ATP-PPase domain; that stretch reads WTAENIIEDA…LGLPAEMINR (193 aa). 233-239 serves as a coordination point for ATP; the sequence is SGGVDSS.

In terms of assembly, homodimer.

It catalyses the reaction XMP + L-glutamine + ATP + H2O = GMP + L-glutamate + AMP + diphosphate + 2 H(+). Its pathway is purine metabolism; GMP biosynthesis; GMP from XMP (L-Gln route): step 1/1. Catalyzes the synthesis of GMP from XMP. The sequence is that of GMP synthase [glutamine-hydrolyzing] from Haemophilus influenzae (strain PittEE).